The sequence spans 586 residues: Aspartate--tRNA ligase (586 aa).

L-aspartate is bound at residue glutamate 171. The segment at 195-198 is aspartate; the sequence is QLFK. Position 217 (arginine 217) interacts with L-aspartate. ATP-binding positions include 217 to 219 and glutamine 226; that span reads RDE. Histidine 448 lines the L-aspartate pocket. Glutamate 482 provides a ligand contact to ATP. Arginine 489 is a binding site for L-aspartate. 534-537 contacts ATP; it reads GLDR.

The protein belongs to the class-II aminoacyl-tRNA synthetase family. Type 1 subfamily. Homodimer.

The protein resides in the cytoplasm. The catalysed reaction is tRNA(Asp) + L-aspartate + ATP = L-aspartyl-tRNA(Asp) + AMP + diphosphate. Catalyzes the attachment of L-aspartate to tRNA(Asp) in a two-step reaction: L-aspartate is first activated by ATP to form Asp-AMP and then transferred to the acceptor end of tRNA(Asp). This is Aspartate--tRNA ligase from Buchnera aphidicola subsp. Acyrthosiphon pisum (strain 5A).